Consider the following 369-residue polypeptide: Putative protein FAM10A5 (369 aa).

Positions 38–98 (MGGKVPPATQ…IEPDTDAPQE (61 aa)) are disordered. Basic and acidic residues predominate over residues 49–73 (AKSEENTKEEKPDSKKVEEDLKADE). Positions 89-98 (IEPDTDAPQE) are enriched in acidic residues. TPR repeat units lie at residues 114–147 (ANDK…NPRL), 149–181 (ILYA…NPDS), and 183–215 (QPYK…DYDE). Residues 256–272 (KAQEEQERAQREEEARR) show a composition bias toward basic and acidic residues. The tract at residues 256–300 (KAQEEQERAQREEEARRQSGAHYGPFPGGFPGGMPGNFPGGMPGM) is disordered. The span at 281 to 300 (FPGGFPGGMPGNFPGGMPGM) shows a compositional bias: gly residues. Residues 319 to 358 (DPEALAAMQDPEVMVAFQDVAQNPANMSKYQSNPKVMNLI) enclose the STI1 domain. Residue Ser-346 is modified to Phosphoserine. Lys-353 and Lys-360 each carry N6-acetyllysine.

This sequence belongs to the FAM10 family.

The protein localises to the cytoplasm. This chain is Putative protein FAM10A5 (ST13P5), found in Homo sapiens (Human).